Here is a 190-residue protein sequence, read N- to C-terminus: MILPINTYSDEVLHQKAKPLKGVDADISSLIDSMFESMENASGIGLAAPQVGCSIRLLVLDVSCMKSYEDVPPMVVINPNVLAVRGKNLMEEGCLSVPGVQGDVLRPSEITLKYRDRNFQEHTEEFSGMLARVLQHEIDHLNGTLFVDRMEKRDRRRIQQELDDIAAGLVPADYPIARECSRGGEGPACM.

Residues Cys94 and His136 each contribute to the Fe cation site. Glu137 is a catalytic residue. His140 serves as a coordination point for Fe cation.

It belongs to the polypeptide deformylase family. It depends on Fe(2+) as a cofactor.

The enzyme catalyses N-terminal N-formyl-L-methionyl-[peptide] + H2O = N-terminal L-methionyl-[peptide] + formate. Functionally, removes the formyl group from the N-terminal Met of newly synthesized proteins. Requires at least a dipeptide for an efficient rate of reaction. N-terminal L-methionine is a prerequisite for activity but the enzyme has broad specificity at other positions. This Chlorobium luteolum (strain DSM 273 / BCRC 81028 / 2530) (Pelodictyon luteolum) protein is Peptide deformylase.